A 406-amino-acid polypeptide reads, in one-letter code: Argininosuccinate synthase (406 aa).

8–16 is an ATP binding site; it reads AYSGGLDTS. Tyrosine 86 is an L-citrulline binding site. Glycine 116 provides a ligand contact to ATP. Residues threonine 118, asparagine 122, and aspartate 123 each coordinate L-aspartate. Residue asparagine 122 participates in L-citrulline binding. 5 residues coordinate L-citrulline: arginine 126, serine 174, serine 183, glutamate 259, and tyrosine 271.

This sequence belongs to the argininosuccinate synthase family. Type 1 subfamily. In terms of assembly, homotetramer.

The protein localises to the cytoplasm. The catalysed reaction is L-citrulline + L-aspartate + ATP = 2-(N(omega)-L-arginino)succinate + AMP + diphosphate + H(+). It functions in the pathway amino-acid biosynthesis; L-arginine biosynthesis; L-arginine from L-ornithine and carbamoyl phosphate: step 2/3. The sequence is that of Argininosuccinate synthase from Dehalococcoides mccartyi (strain ATCC BAA-2266 / KCTC 15142 / 195) (Dehalococcoides ethenogenes (strain 195)).